Reading from the N-terminus, the 141-residue chain is Hemoglobin subunit alpha-A (141 aa).

Residues Val1–Arg141 enclose the Globin domain. His58 lines the O2 pocket. Position 87 (His87) interacts with heme b.

This sequence belongs to the globin family. Heterotetramer of two alpha chains and two beta chains. As to expression, red blood cells.

Its function is as follows. Involved in oxygen transport from the lung to the various peripheral tissues. The sequence is that of Hemoglobin subunit alpha-A (HBAA) from Chroicocephalus ridibundus (Black-headed gull).